Reading from the N-terminus, the 191-residue chain is LHFPL tetraspan subfamily member 7 protein (191 aa).

The next 4 helical transmembrane spans lie at 6–26 (MGSL…FSLM), 72–92 (IAAV…VLVL), 112–132 (YAQI…PFNL), and 154–174 (LGWG…LPFI).

This sequence belongs to the TMEM211 family.

It localises to the membrane. The polypeptide is LHFPL tetraspan subfamily member 7 protein (lhfpl7) (Xenopus tropicalis (Western clawed frog)).